Reading from the N-terminus, the 348-residue chain is Zinc finger and SCAN domain-containing protein 16 (348 aa).

Residues 41–123 (RQHFRKLCYQ…TVLEDLEREL (83 aa)) enclose the SCAN box domain. Disordered stretches follow at residues 160–184 (PKKT…TKNE) and 205–226 (RLNK…EGRS). Basic and acidic residues predominate over residues 163–184 (TQLEQEAGKPQRNGDKTRTKNE). 4 consecutive C2H2-type zinc fingers follow at residues 236-258 (YKCD…RRTH), 264-286 (YKCD…HRVH), 292-314 (YKCK…QRIH), and 320-342 (YECD…QRIH).

The protein belongs to the krueppel C2H2-type zinc-finger protein family.

The protein localises to the nucleus. Its function is as follows. May be involved in transcriptional regulation. In Homo sapiens (Human), this protein is Zinc finger and SCAN domain-containing protein 16 (ZSCAN16).